Here is a 617-residue protein sequence, read N- to C-terminus: Estrogen receptor (617 aa).

The disordered stretch occupies residues 1 to 54 (MSEEQARAEAPAGARQRRRSELEGYSVSLASLKLSPMYPEEEQRTTGGISSTAH). Residues 1 to 186 (MSEEQARAEA…AIGLVKEIRY (186 aa)) are modulating. NR C4-type zinc fingers lie at residues 187 to 207 (CSVC…CEGC) and 223 to 247 (CPAT…LRKC). Residues 187–252 (CSVCSDYASG…RLRKCYEVGM (66 aa)) constitute a DNA-binding region (nuclear receptor). Positions 253 to 315 (MKGGFRKERG…GGGVADVVCM (63 aa)) are hinge. The tract at residues 269-303 (NRRPSGLKERERGYSKAQSGSDVREALPQDGQSSS) is disordered. The NR LBD domain occupies 316–552 (SPEQVLLLLL…DLLLEMLDAH (237 aa)). The segment at 568-617 (VSSSPTTTATTPTTNTTTTTTTTTHHPSNGSTCPADLPSNPPGPGQSPSP) is disordered. Low complexity predominate over residues 573–591 (TTTATTPTTNTTTTTTTTT). Over residues 606–617 (SNPPGPGQSPSP) the composition is skewed to pro residues.

It belongs to the nuclear hormone receptor family. NR3 subfamily. As to quaternary structure, binds DNA as a homodimer. Can form a heterodimer with ER-beta. As to expression, ovary and testis.

It is found in the nucleus. In terms of biological role, the steroid hormones and their receptors are involved in the regulation of eukaryotic gene expression and affect cellular proliferation and differentiation in target tissues. The polypeptide is Estrogen receptor (esr1) (Ictalurus punctatus (Channel catfish)).